The sequence spans 530 residues: Type 2 DNA topoisomerase 6 subunit B (530 aa).

ATP contacts are provided by residues N42, D76, 97 to 98 (SK), 106 to 113 (GMYGLGVK), and K427.

It belongs to the TOP6B family. As to quaternary structure, homodimer. Heterotetramer of two Top6A and two Top6B chains.

The catalysed reaction is ATP-dependent breakage, passage and rejoining of double-stranded DNA.. Functionally, relaxes both positive and negative superturns and exhibits a strong decatenase activity. The chain is Type 2 DNA topoisomerase 6 subunit B from Saccharolobus solfataricus (strain ATCC 35092 / DSM 1617 / JCM 11322 / P2) (Sulfolobus solfataricus).